A 580-amino-acid polypeptide reads, in one-letter code: Viral transcription factor IE2 (580 aa).

The span at 1–11 (MESSAKRKMDP) shows a compositional bias: basic and acidic residues. Disordered regions lie at residues 1–30 (MESSAKRKMDPDNPDEGPSSKVPRPETPVT) and 99–161 (DSSS…VIIK). Polar residues predominate over residues 99–133 (DSSSTGPTLTTHSCSVSSAPLNKPTPTSVAVTNTP). Glycyl lysine isopeptide (Lys-Gly) (interchain with G-Cter in SUMO) cross-links involve residues K175 and K180. The SUMO-interacting motif 1/SIM1 motif lies at 199-202 (CIVI). A phosphoserine; by host CK2 mark is found at S203 and S205. The segment at 206–335 (EEEQGEEVET…KSKRISELDN (130 aa)) is disordered. Low complexity-rich tracts occupy residues 216-236 (RGATASSPSTGSGTPRVTSPT), 259-271 (SSSSSSSCSSASD), and 302-317 (AASSSLLSCGHQSSGG). The SUMO-interacting motif 1/SIM2 motif lies at 410-413 (IQII). Positions 501–504 (VDLL) match the SUMO-interacting motif 1/SIM3 motif.

The protein belongs to the HHV-5 IE2 protein family. As to quaternary structure, interacts with host SUMO-modified form of TATA-binding protein (TBP)-associated factor 12/TAF12 in a SIM-dependent manner; this interaction increases the transactivation activity of IE2. Interacts with host CHAF1A. Interacts with several components of the host transcriptional machinery including TBP, TF2B and CREB1. Interacts with host DNA replication licensing factor MCM3. Interacts with host PLSCR1; this interaction inhibits IE2 transactivating activity. Phosphorylated by host CK2 at Ser-203 and Ser-205; leading to enhanced SUMOylation. In terms of processing, SUMOylated; SUMOylation is enhanced when IE2 is phosphorylated by host CK2. The sumoylation is necessary for efficient replication of the virus and thus for the function of this viral transcription factor.

It localises to the host nucleus. Functionally, stimulates viral early and late gene expression and thus play a crucial role in the regulation of productive infection. Selectively drives host RNA Pol II transcription initiation at a subset of viral early-late and late promoters without substantially affecting Pol II transcription of expressed host genes. Mechanistically, forms a repressive complex at the major immediate-early promoter region involving direct association with host nucleosomes and TBP. Concerning activation, stimulates transcription by binding nearby, but not within, core promoter regions. In addition, activates quiescent cells to reenter the cell cycle and up-regulates several E2F-responsive genes, which are responsible for pushing the cell into S phase. In S-phase, inhibits cellular DNA synthesis and blocks further cell cycle progression. This Human cytomegalovirus (strain AD169) (HHV-5) protein is Viral transcription factor IE2 (UL122).